Reading from the N-terminus, the 363-residue chain is Chemerin-like receptor 1 (363 aa).

Residues 1 to 39 (MDFEDYNSTYEDSYTDDFDTIVALEEFSPLEGRVVRIFL) are Extracellular-facing. Residue Asn7 is glycosylated (N-linked (GlcNAc...) asparagine). The helical transmembrane segment at 40–60 (VVVYSIICFLGILGNGLVIVI) threads the bilayer. Topologically, residues 61 to 71 (ATFKMKKTVNT) are cytoplasmic. The helical transmembrane segment at 72-92 (VWFLNLAVADFLFNVFLPIHI) threads the bilayer. Residues 93-109 (AYAAMDYHWVFGTAMCK) are Extracellular-facing. The cysteines at positions 108 and 185 are disulfide-linked. The chain crosses the membrane as a helical span at residues 110-130 (ISNFLLIHNMYTSVFLLTVIS). Residues 131-152 (FDRCISVLLPVWSQNHRSIRLA) lie on the Cytoplasmic side of the membrane. A helical membrane pass occupies residues 153–173 (YMACVVIWVLAFFLSSPSLVF). The Extracellular segment spans residues 174–220 (RDTAHLHGKISCFNNFSLSATSSSSWPTHPQMDTVGFGRQMVVTITR). N-linked (GlcNAc...) asparagine glycosylation occurs at Asn188. Residues 221–241 (FLCGFLVPVLIISACYFTIVY) traverse the membrane as a helical segment. Residues 242–256 (KLRRNRLAKTKKPFK) are Cytoplasmic-facing. The chain crosses the membrane as a helical span at residues 257–277 (IIVTIIITFFLCWCPYHTLYL). Residues 278 to 283 (LELHHR) are Extracellular-facing. A helical transmembrane segment spans residues 284–304 (AMPGSVFSLGVPLATAIAIAN). At 305–363 (SCMNPILYVFMGQDFKKFKVALFSRLVNALSEDTGHSSYPSHRSFTKMSSMNERETSML) the chain is on the cytoplasmic side. Ser335 carries the phosphoserine modification. Residues 337 to 363 (DTGHSSYPSHRSFTKMSSMNERETSML) are disordered. The residue at position 338 (Thr338) is a Phosphothreonine. Positions 340 to 355 (HSSYPSHRSFTKMSSM) are enriched in polar residues. A phosphoserine mark is found at Ser345, Ser348, and Ser354.

Belongs to the chemokine-like receptor (CMKLR) family. In terms of tissue distribution, predominantly expressed in spleen and temperately in adipose tissue.

The protein localises to the cell membrane. In terms of biological role, receptor for the chemoattractant adipokine chemerin/RARRES2 and for the omega-3 fatty acid derived molecule resolvin E1. Interaction with RARRES2 initiates activation of G proteins G(i)/G(o) and beta-arrestin pathways inducing cellular responses via second messenger pathways such as intracellular calcium mobilization, phosphorylation of MAP kinases MAPK1/MAPK3 (ERK1/2), TYRO3, MAPK14/P38MAPK and PI3K leading to multifunctional effects, like, reduction of immune responses, enhancing of adipogenesis and angionesis. Resolvin E1 down-regulates cytokine production in macrophages by reducing the activation of MAPK1/3 (ERK1/2) and NF-kappa-B. Positively regulates adipogenesis and adipocyte metabolism. The chain is Chemerin-like receptor 1 (CMLKR1) from Sus scrofa (Pig).